The sequence spans 333 residues: Transcription factor HHO6 (333 aa).

In terms of domain architecture, HTH myb-type spans 189–249 (ALRKQRRCWN…HLQKYRLHIR (61 aa)). A DNA-binding region (H-T-H motif) is located at residues 220-245 (PKQIREHMQEEGLTNDEVKSHLQKYR). The disordered stretch occupies residues 274 to 333 (DEEETCEGGESLKRSNAQSDSPQGPLQLPSTTTTTGGDSSMEDVEDAKSESFQLERLRSP). Polar residues predominate over residues 287–303 (RSNAQSDSPQGPLQLPS). The segment covering 319-333 (DAKSESFQLERLRSP) has biased composition (basic and acidic residues).

The protein localises to the nucleus. Functionally, probable transcription factor involved in phosphate signaling in roots. The polypeptide is Transcription factor HHO6 (Arabidopsis thaliana (Mouse-ear cress)).